The primary structure comprises 832 residues: MPLSYQHFRRLLLLDDEAGPLEEELPRLADEGLNRRVAEDLNLGNLNVSIPWTHKVGNFTGFYSSTVPVFNPHWETPSFPNIHLHQDIIKKCEQFVGPLTVNEKRRLQLIMPARFYPKVTKYLPLDKGIKPYYPEHLVNHYFQTRHYLHTLWKAGILYKRETTHSASFCGSPYSWEQDLQHGAESIHQQSSGILSRPPVGSSLQSKHRKSRLGLQSQQGHLARRQQGWSWSIRAGTHPTARRPFGVEPSGSGHTTHRASKSASCLYQSPDRKATYPSVSTFERHSSSGRAVELHNFPPNSARSQSERPIFPCWWLQFRNSKPCSDYCLSLIVNLLEDWGPCDEYGEHHIRIPRTPARVTGGVFLVDKNPHNTAESRLVVDFSQFSRGNYRVSWPKFAVPNLQSLTNLLSSNLSWLSLDVSAGFYHLPLHPAAMPHLLVGSSGVSRYVARLSSNSRNNNNQYGTMQNLHDSCSRQLYVSLMLLYQNFGWKLHLYSHPIVLGFRKIPMGVGLSPFLLAQFTSAICSVVRRAFPHCLAFSYMDDVVLGAKSVQHLESLFTAVTNFLLSLGIHLNPNKTKRWGYSLHFMGYVIGCYGSLPQEHIIQKIKECFRKVPVNRPIDWKVCQRIVGLLGFAAPFTQCGYPALMPLYACIQFKQAFTFSPTYKAFLCKQYLNLYPVARQRPGLCQVFADATPTGWGLGMGHQRMRGTFSAPLPIHTAELLAACFARSRSGANILGTDNSVVLSRKYTSFPWLLGCAANWILRGTSFVYVPSALNPADDPSRGRLGLSRPLLCLPFRPTTGRTSLYADSPSVPSHLPDRVHFASPLHVAWRPP.

The segment at 1–177 is terminal protein domain (TP); it reads MPLSYQHFRR…FCGSPYSWEQ (177 aa). The spacer stretch occupies residues 178–335; it reads DLQHGAESIH…YCLSLIVNLL (158 aa). Disordered regions lie at residues 186–218 and 239–266; these read IHQQ…QSQQ and TARR…SCLY. The tract at residues 336–679 is polymerase/reverse transcriptase domain (RT); that stretch reads EDWGPCDEYG…YLNLYPVARQ (344 aa). The Reverse transcriptase domain occupies 346–589; the sequence is EHHIRIPRTP…YSLHFMGYVI (244 aa). 3 residues coordinate Mg(2+): Asp418, Asp540, and Asp541.

It belongs to the hepadnaviridae P protein family.

The enzyme catalyses DNA(n) + a 2'-deoxyribonucleoside 5'-triphosphate = DNA(n+1) + diphosphate. It carries out the reaction Endonucleolytic cleavage to 5'-phosphomonoester.. With respect to regulation, activated by host HSP70 and HSP40 in vitro to be able to bind the epsilon loop of the pgRNA. Because deletion of the RNase H region renders the protein partly chaperone-independent, the chaperones may be needed indirectly to relieve occlusion of the RNA-binding site by this domain. Inhibited by several reverse-transcriptase inhibitors: Lamivudine, Adefovir and Entecavir. Functionally, multifunctional enzyme that converts the viral RNA genome into dsDNA in viral cytoplasmic capsids. This enzyme displays a DNA polymerase activity that can copy either DNA or RNA templates, and a ribonuclease H (RNase H) activity that cleaves the RNA strand of RNA-DNA heteroduplexes in a partially processive 3'- to 5'-endonucleasic mode. Neo-synthesized pregenomic RNA (pgRNA) are encapsidated together with the P protein, and reverse-transcribed inside the nucleocapsid. Initiation of reverse-transcription occurs first by binding the epsilon loop on the pgRNA genome, and is initiated by protein priming, thereby the 5'-end of (-)DNA is covalently linked to P protein. Partial (+)DNA is synthesized from the (-)DNA template and generates the relaxed circular DNA (RC-DNA) genome. After budding and infection, the RC-DNA migrates in the nucleus, and is converted into a plasmid-like covalently closed circular DNA (cccDNA). The activity of P protein does not seem to be necessary for cccDNA generation, and is presumably released from (+)DNA by host nuclear DNA repair machinery. In Homo sapiens (Human), this protein is Protein P.